Here is a 600-residue protein sequence, read N- to C-terminus: 69 kDa paraflagellar rod protein (600 aa).

Residues 335–355 (DKQDEAWRRIQELERVLQRLG) form a calmodulin-binding region.

In terms of assembly, heterodimer of a 69 kDa and a 73 kDa protein.

The protein localises to the cell projection. It is found in the cilium. Its subcellular location is the flagellum. It localises to the cytoplasm. The protein resides in the cytoskeleton. In terms of biological role, major component of the paraflagellar rod (PFR). The PFR is a highly ordered lattices of fibrous proteins that are located inside the flagellum and assume a fixed orientation with respect to the microtubular axoneme. This is 69 kDa paraflagellar rod protein (PFRA) from Trypanosoma brucei brucei.